We begin with the raw amino-acid sequence, 342 residues long: Mitogen-activated protein kinase kinase kinase 20 (342 aa).

One can recognise a Protein kinase domain in the interval 3–268 (WVRGETIGFG…AEMLLNHSFV (266 aa)). Residue 9–17 (IGFGTFSTV) participates in ATP binding. The residue at position 18 (serine 18) is a Phosphoserine. Residue threonine 19 is modified to Phosphothreonine. ATP is bound at residue lysine 36. Phosphotyrosine is present on residues tyrosine 41 and tyrosine 66. Residues serine 93 and serine 114 each carry the phosphoserine modification. The Proton acceptor role is filled by aspartate 131. A required for MKK3 binding region spans residues 285 to 342 (KDEDKVLMSPKCPFEFDDWDSFTLDSNPSFDSPVERLGSLVSGSIPDWSVGGSWLTVR).

Belongs to the protein kinase superfamily. Ser/Thr protein kinase family. As to quaternary structure, interacts with MKK3 and MPK18 via its C-terminal domain. Binds to MKK5. Autophosphorylates; active in phosphorylated state. Dephosphorylated by ABI1. As to expression, expressed in roots, seedlings, leaves, flower buds, flowers and siliques.

The protein resides in the nucleus. It localises to the cytoplasm. It catalyses the reaction L-seryl-[protein] + ATP = O-phospho-L-seryl-[protein] + ADP + H(+). The enzyme catalyses L-threonyl-[protein] + ATP = O-phospho-L-threonyl-[protein] + ADP + H(+). With respect to regulation, activated through serine, threonine and tyrosine phosphorylation, especially upon abscisic acid (ABA) treatment. Restricted activity by ABI1-mediated dephosphorylation. Its function is as follows. Mitogen-activated protein kinase kinase (MAPKK) that phosphorylates both MKK3 and MPK18 and regulate two separate signaling pathways involved in root microtubule functions. MAPKK which regulates abscisic acid (ABA) responses in a MAPKKK20-MKK5-MPK6 cascade involved in root growth (e.g. root cell division and elongation) and stomatal response, probably via MKK5 activation by protein phosphorylation and subsequent activation of MAPK6 by MKK5. Involved in various abiotic stresses (e.g. osmotic stress, cold and hydrogen peroxide) responses by phosphorylating and thus regulating MPK6 activity, in an ABA-independent manner. This is Mitogen-activated protein kinase kinase kinase 20 from Arabidopsis thaliana (Mouse-ear cress).